A 134-amino-acid chain; its full sequence is Large ribosomal subunit protein uL22 (134 aa).

Belongs to the universal ribosomal protein uL22 family. Part of the 50S ribosomal subunit.

This protein binds specifically to 23S rRNA; its binding is stimulated by other ribosomal proteins, e.g. L4, L17, and L20. It is important during the early stages of 50S assembly. It makes multiple contacts with different domains of the 23S rRNA in the assembled 50S subunit and ribosome. Its function is as follows. The globular domain of the protein is located near the polypeptide exit tunnel on the outside of the subunit, while an extended beta-hairpin is found that lines the wall of the exit tunnel in the center of the 70S ribosome. The sequence is that of Large ribosomal subunit protein uL22 from Rhodococcus erythropolis (strain PR4 / NBRC 100887).